The primary structure comprises 201 residues: Ribosomal RNA large subunit methyltransferase E (201 aa).

Gly-49, Trp-51, Asp-69, Asp-87, and Asp-111 together coordinate S-adenosyl-L-methionine. Catalysis depends on Lys-151, which acts as the Proton acceptor.

The protein belongs to the class I-like SAM-binding methyltransferase superfamily. RNA methyltransferase RlmE family.

It localises to the cytoplasm. It catalyses the reaction uridine(2552) in 23S rRNA + S-adenosyl-L-methionine = 2'-O-methyluridine(2552) in 23S rRNA + S-adenosyl-L-homocysteine + H(+). Its function is as follows. Specifically methylates the uridine in position 2552 of 23S rRNA at the 2'-O position of the ribose in the fully assembled 50S ribosomal subunit. The sequence is that of Ribosomal RNA large subunit methyltransferase E from Nitratidesulfovibrio vulgaris (strain DSM 19637 / Miyazaki F) (Desulfovibrio vulgaris).